We begin with the raw amino-acid sequence, 957 residues long: Outer kinetochore KNL1 complex subunit knl-1 (957 aa).

Residues 87 to 90 form repeat 1; the sequence is MDIT. Residues 87–393 form an 8 X 4 AA repeats of M-[D/E]-[I/L/M]-[S/T] region; it reads MDITGLNSTP…NFDDVAMDIT (307 aa). Residues 89–111 form a disordered region; the sequence is ITGLNSTPVTPKTQTPFNGSMDM. Residues 91-106 show a composition bias toward polar residues; that stretch reads GLNSTPVTPKTQTPFN. Tandem repeats lie at residues 109–112, 206–209, 251–254, 282–285, 326–329, 367–370, and 390–393. The disordered stretch occupies residues 476–504; it reads SLQQSSMRMSTTITEDVTASKNPESSTIS. The stretch at 830–950 forms a coiled coil; sequence KFAKESNVEI…RKKKEEMVER (121 aa).

Component of the KNL1 complex composed of knl-1 and kbp-5. Part of the ten-subunit outer kinetochore KMN network that includes the KNL1, MIS12 and NDC80 complexes. Interacts with the protein phosphatase 1 (PP1) catalytic subunit gsp-1; the interaction is direct. Interacts with the protein phosphatase 1 (PP1) catalytic subunit gsp-2; the interaction is direct. Interacts with the MIS12 complex subunits kbp-1, kbp-2 and mis-12. Interacts with the NDC80 complex components ndc-80 and him-10. Interacts with knl-3. Interacts with kbp-3. Interacts with kbp-4. Interacts with kbp-5.

Its subcellular location is the cytoplasm. The protein localises to the cell cortex. The protein resides in the chromosome. It is found in the centromere. It localises to the kinetochore. In terms of biological role, acts as a component of the outer kinetochore KNL1 complex that serves as a docking point for spindle assembly checkpoint components and mediates microtubule-kinetochore interactions. Kinetochores, consisting of a centromere-associated inner segment and a microtubule-contacting outer segment, play a crucial role in chromosome segregation by mediating the physical connection between centromeric DNA and spindle microtubules. The outer kinetochore is made up of the ten-subunit KMN network, comprising the MIS12, NDC80 and KNL1 complexes, and auxiliary microtubule-associated components; together they connect the outer kinetochore with the inner kinetochore, bind microtubules, and mediate interactions with mitotic checkpoint proteins that delay anaphase until chromosomes are bioriented on the spindle. Binds the protein phosphatase 1 catalytic subunits gsp-1 and gsp-2, which has a role in delaying formation of load-bearing kinetochore-microtubule attachments. Required for the recruitment of spindle-assembly checkpoint components bub-1 and mdf-1/2 to unattached kinetochores. Binds microtubules which plays a role in silencing of the spindle assembly checkpoint, but not the formation of load-bearing microtubule-kinetochore attachments. Has a role in the correct localization of the spindly-like protein spdl-1 and the RZZ complex that is composed of rod-1, czw-1 and zwl-1 to kinetochores. This is Outer kinetochore KNL1 complex subunit knl-1 from Caenorhabditis briggsae.